Reading from the N-terminus, the 320-residue chain is Ribose-phosphate pyrophosphokinase (320 aa).

Residues aspartate 43 to glutamate 45 and arginine 102 to glutamine 103 each bind ATP. Residues histidine 136 and aspartate 178 each coordinate Mg(2+). Residue lysine 201 is part of the active site. D-ribose 5-phosphate-binding positions include arginine 203, aspartate 227, and aspartate 231 to threonine 235.

This sequence belongs to the ribose-phosphate pyrophosphokinase family. Class I subfamily. In terms of assembly, homohexamer. Mg(2+) serves as cofactor.

The protein localises to the cytoplasm. The enzyme catalyses D-ribose 5-phosphate + ATP = 5-phospho-alpha-D-ribose 1-diphosphate + AMP + H(+). The protein operates within metabolic intermediate biosynthesis; 5-phospho-alpha-D-ribose 1-diphosphate biosynthesis; 5-phospho-alpha-D-ribose 1-diphosphate from D-ribose 5-phosphate (route I): step 1/1. Involved in the biosynthesis of the central metabolite phospho-alpha-D-ribosyl-1-pyrophosphate (PRPP) via the transfer of pyrophosphoryl group from ATP to 1-hydroxyl of ribose-5-phosphate (Rib-5-P). The chain is Ribose-phosphate pyrophosphokinase from Clostridium tetani (strain Massachusetts / E88).